We begin with the raw amino-acid sequence, 423 residues long: Serine hydroxymethyltransferase (423 aa).

121 to 123 (GHI) is a (6S)-5,6,7,8-tetrahydrofolate binding site. N6-(pyridoxal phosphate)lysine is present on Lys-227. Glu-242 is a (6S)-5,6,7,8-tetrahydrofolate binding site.

Belongs to the SHMT family. Homodimer. Requires pyridoxal 5'-phosphate as cofactor.

Its subcellular location is the cytoplasm. It carries out the reaction 5,10-methylenetetrahydromethanopterin + glycine + H2O = 5,6,7,8-tetrahydromethanopterin + L-serine. It functions in the pathway amino-acid biosynthesis; glycine biosynthesis; glycine from L-serine: step 1/1. In terms of biological role, catalyzes the reversible interconversion of serine and glycine with tetrahydromethanopterin (H4MPT) serving as the one-carbon carrier. Cannot use tetrahydrofolate (THF or H4PteGlu) instead of H4MPT as the pteridine substrate. Also probably exhibits a pteridine-independent aldolase activity toward beta-hydroxyamino acids, producing glycine and aldehydes, via a retro-aldol mechanism. This Methanothermobacter thermautotrophicus (strain ATCC 29096 / DSM 1053 / JCM 10044 / NBRC 100330 / Delta H) (Methanobacterium thermoautotrophicum) protein is Serine hydroxymethyltransferase.